Reading from the N-terminus, the 177-residue chain is ATP-dependent protease subunit HslV (177 aa).

The active site involves Thr5. Residues Gly161, Cys164, and Thr167 each coordinate Na(+).

This sequence belongs to the peptidase T1B family. HslV subfamily. A double ring-shaped homohexamer of HslV is capped on each side by a ring-shaped HslU homohexamer. The assembly of the HslU/HslV complex is dependent on binding of ATP.

It is found in the cytoplasm. It catalyses the reaction ATP-dependent cleavage of peptide bonds with broad specificity.. With respect to regulation, allosterically activated by HslU binding. Protease subunit of a proteasome-like degradation complex believed to be a general protein degrading machinery. The chain is ATP-dependent protease subunit HslV from Campylobacter concisus (strain 13826).